The primary structure comprises 699 residues: Elongation factor G (699 aa).

Residues E8–I283 form the tr-type G domain. GTP contacts are provided by residues A17–T24, D81–H85, and N135–D138.

It belongs to the TRAFAC class translation factor GTPase superfamily. Classic translation factor GTPase family. EF-G/EF-2 subfamily.

It localises to the cytoplasm. In terms of biological role, catalyzes the GTP-dependent ribosomal translocation step during translation elongation. During this step, the ribosome changes from the pre-translocational (PRE) to the post-translocational (POST) state as the newly formed A-site-bound peptidyl-tRNA and P-site-bound deacylated tRNA move to the P and E sites, respectively. Catalyzes the coordinated movement of the two tRNA molecules, the mRNA and conformational changes in the ribosome. This chain is Elongation factor G, found in Rickettsia felis (strain ATCC VR-1525 / URRWXCal2) (Rickettsia azadi).